A 692-amino-acid chain; its full sequence is MSGGRFDFDDGGAYCGGWEGGKAHGHGLCTGPKGQGEYSGSWNFGFEVAGVYTWPSGNTFEGYWSQGKRHGLGIETKGRWLYKGEWTHGFKGRYGIRQSTNSGAKYEGTWNNGLQDGYGTETYADGGTYQGQFTNGMRHGYGVRQSVPYGMAVVVRSPLRTSLSSLRSEHSNGTVAPDSPAADGPTLPLPPVPRGGFALSLLATAEAARPPGLFTRGALLGRLRRSESRTSLGSQRSRLSFLKSELSSGASDAASTGSLAEGAEGPDDAAAPFDADIDATTTETYMGEWKNDKRSGFGVSERSSGLRYEGEWLDNLRHGYGRTTLPDGHREEGKYRHNVLVKGTKRRVLPLKSNKVRQKVEHGVEGAQRAAAIARQKAEIAASRTSHAKAKAEAAEQAALAANQESNIARTLAKELAPDFYQPGPEYQKRRLLQEILENSESLLEPRERGPGTGLPERPRESPQLHERETPQPEGGPPSPAGTPPQPKRPRPGSSKDGLLSPGAWNGEPGGEGSRPATPSDGAGRRSPARPASEHMAIEALQPPPAPSREPEVALYRGYHSYAVRTGPPEPPPLEDEPEPEPEVPRSDSEPPSPVSATVQEEESPAPRSRVPAKPATLEPKPIVPKAEPKAKARKTEARGLSKAGAKKKGRKEVAQEAEAEVEVEEVPNTVLICMVILLNIGLAILFVHLLT.

Over 1-670 (MSGGRFDFDD…EVEVEEVPNT (670 aa)) the chain is Cytoplasmic. MORN repeat units follow at residues 14–36 (YCGGWEGGKAHGHGLCTGPKGQG), 38–59 (YSGSWNFGFEVAGVYTWPSGNT), 60–79 (FEGYWSQGKRHGLGIETKGR), 82–104 (YKGEWTHGFKGRYGIRQSTNSGA), 106–128 (YEGTWNNGLQDGYGTETYADGGT), and 129–151 (YQGQFTNGMRHGYGVRQSVPYGM). Ser-162 and Ser-165 each carry phosphoserine. 2 disordered regions span residues 164–190 (SSLRSEHSNGTVAPDSPAADGPTLPLP) and 246–273 (LSSGASDAASTGSLAEGAEGPDDAAAPF). MORN repeat units follow at residues 285–307 (YMGEWKNDKRSGFGVSERSSGLR) and 308–330 (YEGEWLDNLRHGYGRTTLPDGHR). The Bipartite nuclear localization signal signature appears at 345–359 (KRRVLPLKSNKVRQK). The interval 439-661 (NSESLLEPRE…KEVAQEAEAE (223 aa)) is disordered. Phosphoserine is present on residues Ser-440, Ser-442, and Ser-462. A compositionally biased stretch (basic and acidic residues) spans 457 to 471 (ERPRESPQLHERETP). Phosphothreonine is present on Thr-470. The span at 474 to 487 (EGGPPSPAGTPPQP) shows a compositional bias: pro residues. Phosphoserine is present on Ser-479. Position 483 is a phosphothreonine (Thr-483). A Nuclear localization signal motif is present at residues 488–492 (KRPRP). Ser-527 and Ser-533 each carry phosphoserine. The segment covering 573–582 (PLEDEPEPEP) has biased composition (acidic residues). A phosphoserine mark is found at Ser-589, Ser-593, Ser-604, and Ser-609. A compositionally biased stretch (basic and acidic residues) spans 627–640 (AEPKAKARKTEARG). Residues 671–691 (VLICMVILLNIGLAILFVHLL) traverse the membrane as a helical; Anchor for type IV membrane protein segment.

This sequence belongs to the junctophilin family. As to quaternary structure, interacts with TRPC3. Interacts with BAG5 and HSPA8; the interaction with HSPA8 is increased in the presence of BAG5. Junctophilin-2 N-terminal fragment: Interacts with MEF2C. Post-translationally, proteolytically cleaved by calpain in response to cardiac stress. The major cleavage site takes place at the C-terminus and leads to the release of the Junctophilin-2 N-terminal fragment chain (JP2NT). Phosphorylation on Ser-165, probably by PKC, affects RYR1-mediated calcium ion release, interaction with TRPC3, and skeletal muscle myotubule development.

The protein localises to the cell membrane. It localises to the sarcoplasmic reticulum membrane. The protein resides in the endoplasmic reticulum membrane. Its subcellular location is the nucleus. In terms of biological role, membrane-binding protein that provides a structural bridge between the plasma membrane and the sarcoplasmic reticulum and is required for normal excitation-contraction coupling in cardiomyocytes. Provides a structural foundation for functional cross-talk between the cell surface and intracellular Ca(2+) release channels by maintaining the 12-15 nm gap between the sarcolemma and the sarcoplasmic reticulum membranes in the cardiac dyads. Necessary for proper intracellular Ca(2+) signaling in cardiac myocytes via its involvement in ryanodine receptor-mediated calcium ion release. Contributes to the construction of skeletal muscle triad junctions. Its function is as follows. Transcription repressor required to safeguard against the deleterious effects of cardiac stress. Generated following cleavage of the Junctophilin-2 chain by calpain in response to cardiac stress in cardiomyocytes. Following cleavage and release from the membrane, translocates to the nucleus, binds DNA and represses expression of genes implicated in cell growth and differentiation, hypertrophy, inflammation and fibrosis. Modifies the transcription profile and thereby attenuates pathological remodeling in response to cardiac stress. Probably acts by competing with MEF2 transcription factors and TATA-binding proteins. The sequence is that of Junctophilin-2 from Rattus norvegicus (Rat).